Consider the following 382-residue polypeptide: Alpha-2B adrenergic receptor (382 aa).

A helical transmembrane segment spans residues 1 to 25; the sequence is AIAAVITFLILFTIFGNALVILAVL. The Cytoplasmic segment spans residues 26–36; it reads TSRSLRAPQNL. Residues 37-62 traverse the membrane as a helical segment; that stretch reads FLVSLAAADILVATLIIPFSLANELL. Topologically, residues 63–72 are extracellular; sequence GYWYFRHTWC. Cys72 and Cys151 are disulfide-bonded. A helical transmembrane segment spans residues 73–95; sequence EVYLALDVLFCTSSIVHLCAISL. The Cytoplasmic portion of the chain corresponds to 96–117; it reads DRYWSVSRALEYNSKRTPRRIK. Residues 118 to 140 traverse the membrane as a helical segment; the sequence is GIILTVWLIAAFISLPPLIYKGD. The Extracellular portion of the chain corresponds to 141-156; that stretch reads KGKKPGGRPQCKLNEE. The chain crosses the membrane as a helical span at residues 157 to 180; sequence AWYILSSSIGSFFAPCLIMILVYL. Residues 181–346 lie on the Cytoplasmic side of the membrane; it reads RIYLIAKRRN…MNREKRFTFV (166 aa). Residues 192-305 are disordered; sequence QGPHGKQAPG…QGTPNFQPSQ (114 aa). Residues 271-284 are compositionally biased toward acidic residues; the sequence is EEEEEEEEEEEEEC. Residues 291–305 show a composition bias toward polar residues; sequence TSSSLQGTPNFQPSQ. Residues 347 to 370 traverse the membrane as a helical segment; that stretch reads LAVVIGVFVLCWFPFFFSYSLGAI. The Extracellular portion of the chain corresponds to 371–379; sequence CPQHCKVPH. The chain crosses the membrane as a helical span at residues 380 to 382; sequence GLF.

It belongs to the G-protein coupled receptor 1 family. Adrenergic receptor subfamily. ADRA2B sub-subfamily. As to quaternary structure, interacts with RAB26. Interacts with PPP1R9B. Interacts with GGA1, GGA2 and GGA3.

The protein resides in the cell membrane. Alpha-2 adrenergic receptors mediate the catecholamine-induced inhibition of adenylate cyclase through the action of G proteins. This is Alpha-2B adrenergic receptor (ADRA2B) from Didelphis virginiana (North American opossum).